Consider the following 334-residue polypeptide: Anthranilate phosphoribosyltransferase (334 aa).

5-phospho-alpha-D-ribose 1-diphosphate-binding positions include Gly-79, 82–83, Ser-87, 89–92, 107–115, and Ser-119; these read GD, NIST, and KHGNRSISS. Gly-79 serves as a coordination point for anthranilate. Ser-91 is a Mg(2+) binding site. Asn-110 is an anthranilate binding site. Arg-165 provides a ligand contact to anthranilate. Residues Asp-224 and Glu-225 each contribute to the Mg(2+) site.

Belongs to the anthranilate phosphoribosyltransferase family. As to quaternary structure, homodimer. Mg(2+) serves as cofactor.

It carries out the reaction N-(5-phospho-beta-D-ribosyl)anthranilate + diphosphate = 5-phospho-alpha-D-ribose 1-diphosphate + anthranilate. It functions in the pathway amino-acid biosynthesis; L-tryptophan biosynthesis; L-tryptophan from chorismate: step 2/5. Catalyzes the transfer of the phosphoribosyl group of 5-phosphorylribose-1-pyrophosphate (PRPP) to anthranilate to yield N-(5'-phosphoribosyl)-anthranilate (PRA). The polypeptide is Anthranilate phosphoribosyltransferase (Streptococcus pneumoniae serotype 19F (strain G54)).